The sequence spans 563 residues: Membrane protein insertase YidC (563 aa).

Residues 1 to 21 form a helical membrane-spanning segment; the sequence is MDIKRTILIVALAIVTYVGVL. The interval 43-62 is disordered; that stretch reads APGIPDTAAGTNGSASADVP. A run of 5 helical transmembrane segments spans residues 344–364, 370–390, 440–460, 471–491, and 518–538; these read LELTVDYGFLWFIAQPIFWLL, ILGNWGWSIIVLTMLIKGLFF, LGGCLPILVQMPVFLSLYWVL, WILWITDLSIKDPFFILPIIM, and PIIFTFFFLWFPAGLVLYWVV.

Belongs to the OXA1/ALB3/YidC family. Type 1 subfamily. Interacts with the Sec translocase complex via SecD. Specifically interacts with transmembrane segments of nascent integral membrane proteins during membrane integration.

The protein localises to the cell inner membrane. Functionally, required for the insertion and/or proper folding and/or complex formation of integral membrane proteins into the membrane. Involved in integration of membrane proteins that insert both dependently and independently of the Sec translocase complex, as well as at least some lipoproteins. Aids folding of multispanning membrane proteins. The chain is Membrane protein insertase YidC from Pseudomonas syringae pv. syringae (strain B728a).